A 395-amino-acid chain; its full sequence is Zinc-regulated GTPase metalloprotein activator 1F (395 aa).

Residues 1–22 (MLPAVGSVDEEEDPAEEDCPEL) form a disordered region. Positions 8-20 (VDEEEDPAEEDCP) are enriched in acidic residues. Residues 17-24 (EDCPELVP) carry the psi-PxLVp motif motif. 49-56 (GYLGAGKT) contacts GTP. The Zn(2+) site is built by Cys-107, Cys-109, and Cys-110. Residues 107-110 (CLCC) carry the CXCC motif motif. Residues 110-114 (CSVKD) and 203-206 (NKTD) each bind GTP. The 104-residue stretch at 274–377 (IVTITFDVPG…ILKQLFIATV (104 aa)) folds into the CobW C-terminal domain.

The protein belongs to the SIMIBI class G3E GTPase family. ZNG1 subfamily.

It is found in the nucleus. It catalyses the reaction GTP + H2O = GDP + phosphate + H(+). Zinc chaperone that directly transfers zinc cofactor to target metalloproteins, thereby activating them. Catalyzes zinc insertion into the active site of methionine aminopeptidase METAP1, which function to cleave the initiator methionine from polypeptides during or after protein translation. Mechanistically, the N-terminal psi-PxLVp motif binds to the C6H2-type zinc finger of inactive form of METAP1. After formation of the docked complex, zinc is transferred from the CXCC motif in the GTPase domain of ZNG1F to the zinc binding site in the peptidase domain of METAP1 in a process requiring GTP hydrolysis. GTP/GDP exchange is required for release of active METAP1. This is Zinc-regulated GTPase metalloprotein activator 1F from Homo sapiens (Human).